The chain runs to 243 residues: Complement C1q tumor necrosis factor-related protein 5 (243 aa).

The first 15 residues, 1-15, serve as a signal peptide directing secretion; that stretch reads MRPLLVLLLLGLAAG. Residues 15–125 are disordered; it reads GSPPLDDNKI…PPPSDAPLPF (111 aa). Positions 30 to 95 constitute a Collagen-like domain; that stretch reads GHPGLPGTPG…AGPAGPTGPA (66 aa). The segment covering 83–96 has biased composition (low complexity); sequence RGEAGPAGPTGPAG. The C1q domain maps to 99–238; the sequence is SVPPRSAFSA…GFLVYSDWHS (140 aa).

In terms of assembly, may interact with ERFE. Homotrimer (via collagen-like domain). May form higher order oligomers by supercoiling of the trimers.

The protein resides in the secreted. The sequence is that of Complement C1q tumor necrosis factor-related protein 5 (C1QTNF5) from Homo sapiens (Human).